The primary structure comprises 122 residues: Hydrogenase maturation factor HypA (122 aa).

A Ni(2+)-binding site is contributed by H2. Residues C73, C75, C95, and C98 each coordinate Zn(2+).

The protein belongs to the HypA/HybF family.

Its function is as follows. Involved in the maturation of [NiFe] hydrogenases. Required for nickel insertion into the metal center of the hydrogenase. The sequence is that of Hydrogenase maturation factor HypA from Methanothermobacter thermautotrophicus (strain ATCC 29096 / DSM 1053 / JCM 10044 / NBRC 100330 / Delta H) (Methanobacterium thermoautotrophicum).